We begin with the raw amino-acid sequence, 341 residues long: Putative NADPH-dependent methylglyoxal reductase GRP2 (341 aa).

NADP(+)-binding residues include Lys40 and Tyr171.

The protein belongs to the NAD(P)-dependent epimerase/dehydratase family. Dihydroflavonol-4-reductase subfamily.

Its subcellular location is the cytoplasm. It catalyses the reaction (S)-lactaldehyde + NADP(+) = methylglyoxal + NADPH + H(+). Functionally, catalyzes the irreversible reduction of the cytotoxic compound methylglyoxal (MG, 2-oxopropanal) to (S)-lactaldehyde. MG is synthesized via a bypath of glycolysis from dihydroxyacetone phosphate and is believed to play a role in cell cycle regulation and stress adaptation. The polypeptide is Putative NADPH-dependent methylglyoxal reductase GRP2 (GRP2) (Candida albicans (strain SC5314 / ATCC MYA-2876) (Yeast)).